The sequence spans 64 residues: OPG024 protein (64 aa).

The interval 1–64 (MSSKGGSSGG…GGVKSGTGKI (64 aa)) is disordered. Low complexity predominate over residues 23–34 (NKGSKTYTSSGS). Over residues 49-64 (VNGGVNGGVKSGTGKI) the composition is skewed to gly residues.

This sequence belongs to the orthopoxvirus OPG024 family.

This Cynomys gunnisoni (Gunnison's prairie dog) protein is OPG024 protein (OPG023).